The chain runs to 96 residues: Protein RnfH (96 aa).

The protein belongs to the UPF0125 (RnfH) family.

The chain is Protein RnfH from Citrobacter koseri (strain ATCC BAA-895 / CDC 4225-83 / SGSC4696).